A 166-amino-acid polypeptide reads, in one-letter code: Ribosome maturation factor RimM (166 aa).

The region spanning 94–165 (EGEYYLGKLI…TIELKVLDLL (72 aa)) is the PRC barrel domain.

Belongs to the RimM family. In terms of assembly, binds ribosomal protein uS19.

The protein resides in the cytoplasm. An accessory protein needed during the final step in the assembly of 30S ribosomal subunit, possibly for assembly of the head region. Essential for efficient processing of 16S rRNA. May be needed both before and after RbfA during the maturation of 16S rRNA. It has affinity for free ribosomal 30S subunits but not for 70S ribosomes. This is Ribosome maturation factor RimM from Borrelia garinii subsp. bavariensis (strain ATCC BAA-2496 / DSM 23469 / PBi) (Borreliella bavariensis).